The sequence spans 186 residues: Large ribosomal subunit protein uL5 (186 aa).

It belongs to the universal ribosomal protein uL5 family. As to quaternary structure, part of the 50S ribosomal subunit; part of the 5S rRNA/L5/L18/L25 subcomplex. Contacts the 5S rRNA and the P site tRNA. Forms a bridge to the 30S subunit in the 70S ribosome.

Its function is as follows. This is one of the proteins that bind and probably mediate the attachment of the 5S RNA into the large ribosomal subunit, where it forms part of the central protuberance. In the 70S ribosome it contacts protein S13 of the 30S subunit (bridge B1b), connecting the 2 subunits; this bridge is implicated in subunit movement. Contacts the P site tRNA; the 5S rRNA and some of its associated proteins might help stabilize positioning of ribosome-bound tRNAs. The sequence is that of Large ribosomal subunit protein uL5 from Mycoplasmopsis synoviae (strain 53) (Mycoplasma synoviae).